Consider the following 373-residue polypeptide: ORC1-type DNA replication protein 2 (373 aa).

ATP-binding positions include 63-67 (TGKTS), tyrosine 205, and arginine 217.

Belongs to the CDC6/cdc18 family.

Involved in regulation of DNA replication. The polypeptide is ORC1-type DNA replication protein 2 (cdc6-2) (Methanosarcina acetivorans (strain ATCC 35395 / DSM 2834 / JCM 12185 / C2A)).